Consider the following 166-residue polypeptide: Large ribosomal subunit protein uL10 (166 aa).

It belongs to the universal ribosomal protein uL10 family. As to quaternary structure, part of the ribosomal stalk of the 50S ribosomal subunit. The N-terminus interacts with L11 and the large rRNA to form the base of the stalk. The C-terminus forms an elongated spine to which L12 dimers bind in a sequential fashion forming a multimeric L10(L12)X complex.

In terms of biological role, forms part of the ribosomal stalk, playing a central role in the interaction of the ribosome with GTP-bound translation factors. The chain is Large ribosomal subunit protein uL10 from Staphylococcus aureus (strain JH1).